Consider the following 411-residue polypeptide: Argininosuccinate synthase (411 aa).

ATP is bound by residues 10–18 (AYSGGLDTS) and alanine 37. Residues tyrosine 89 and serine 94 each coordinate L-citrulline. Glycine 119 provides a ligand contact to ATP. Residues threonine 121, asparagine 125, and aspartate 126 each contribute to the L-aspartate site. Asparagine 125 provides a ligand contact to L-citrulline. Positions 129, 178, 187, 263, and 275 each coordinate L-citrulline.

The protein belongs to the argininosuccinate synthase family. Type 1 subfamily. In terms of assembly, homotetramer.

The protein resides in the cytoplasm. It carries out the reaction L-citrulline + L-aspartate + ATP = 2-(N(omega)-L-arginino)succinate + AMP + diphosphate + H(+). It functions in the pathway amino-acid biosynthesis; L-arginine biosynthesis; L-arginine from L-ornithine and carbamoyl phosphate: step 2/3. This Aeromonas salmonicida (strain A449) protein is Argininosuccinate synthase.